Consider the following 890-residue polypeptide: Pentatricopeptide repeat-containing protein At3g57430, chloroplastic (890 aa).

A chloroplast-targeting transit peptide spans 1–44 (MSCPLAFTFSLPSIFPFPSQLLPFSRHKHPYLLRATPTSATEDV). PPR repeat units lie at residues 61–95 (SPEW…GIKP), 96–130 (DNYA…GYGV), 132–162 (SVTV…ISER), 163–197 (NQVS…NVEP), 198–231 (SSFT…GLRK), 235–265 (NSFI…FGGR), 266–300 (DLVT…GVEP), 301–335 (DEFT…GSLD), 337–371 (NSFV…KIGL), 372–398 (WNAM…MEES), 404–438 (NSTT…GLDR), 439–473 (DRFV…DLVT), 474–504 (WNTM…ERKV), 516–550 (NSIT…NLAT), 551–581 (DVAV…IPQK), 582–616 (NVIT…GVKP), 617–652 (NEVT…GVEP), and 653–683 (SSDH…MPRD). The segment at 689–764 (AWSSLLGASR…EPGCSWIEHG (76 aa)) is type E motif. The type E(+) motif stretch occupies residues 765-795 (DEVHKFVAGDSSHPQSEKLSGYLETLWERMR). Residues 796-890 (KEGYVPDTSC…NGTCSCGDYW (95 aa)) form a type DYW motif region.

Belongs to the PPR family. PCMP-H subfamily.

The protein resides in the plastid. Its subcellular location is the chloroplast. Its function is as follows. Involved in RNA editing events in chloroplasts. Required for the editing of a single site in ndhB and ndhF transcripts, which are two plastid-encoded subunits of the chloroplast NAD(P)H dehydrogenase (NDH) complex. Required for the editing of a single site in psbZ. Required for optimal activity of the NDH complex of the photosynthetic electron transport chain. This is Pentatricopeptide repeat-containing protein At3g57430, chloroplastic (PCMP-H81) from Arabidopsis thaliana (Mouse-ear cress).